The chain runs to 203 residues: Nudix hydrolase 12, mitochondrial (203 aa).

Residues 18–166 (NFRLVSGCIP…WMQRALEEFL (149 aa)) enclose the Nudix hydrolase domain. The short motif at 66–87 (GGWEDDETVLEAASREAIEEAG) is the Nudix box element. Glutamate 81 and glutamate 85 together coordinate Mg(2+).

It belongs to the Nudix hydrolase family. The cofactor is Mg(2+). It depends on Mn(2+) as a cofactor. As to expression, expressed in roots, leaves, stems and inflorescences.

Its subcellular location is the mitochondrion. Its function is as follows. Probably mediates the hydrolysis of some nucleoside diphosphate derivatives. The chain is Nudix hydrolase 12, mitochondrial (NUDT12) from Arabidopsis thaliana (Mouse-ear cress).